Here is a 710-residue protein sequence, read N- to C-terminus: Iron-sulfur clusters transporter ATM1, mitochondrial (710 aa).

A mitochondrion-targeting transit peptide spans 1 to 38 (MWLSLPRSGYGSVATLTSKRVLACLTPLRQFSTSPAVS). Residues 35 to 52 (PAVSNANHKNVDNINKSP) are compositionally biased toward polar residues. The segment at 35 to 83 (PAVSNANHKNVDNINKSPANDAANNAVEKGDKPTTSPEKLATKAEKSSA) is disordered. Residues 39-129 (NANHKNVDNI…PKGKTSVKFR (91 aa)) are Mitochondrial matrix-facing. A helical transmembrane segment spans residues 130–151 (VLVAVALLVGAKLLNVQVPFFF). The region spanning 130–419 (VLVAVALLVG…LGSVYRDLRQ (290 aa)) is the ABC transmembrane type-1 domain. The Mitochondrial intermembrane portion of the chain corresponds to 152 to 173 (KEIIDDMNIEWNSATALGVGIT). The chain crosses the membrane as a helical span at residues 174–197 (ALIFSYGAARFGAVLFGELRNAIF). At 198 to 246 (ASVAQKAIKEVATNVFRHLLKLDMAFHLSRQTGGITRAIDRGTKGISFV) the chain is on the mitochondrial matrix side. Residues 247–270 (LSSMVFHIIPIALEISLVCGILSY) form a helical membrane-spanning segment. Position 271 (Asn-271) is a topological domain, mitochondrial intermembrane. A helical transmembrane segment spans residues 272-292 (FGWKYALVTGATMVSYAIFTI). Residues 293–358 (TTTSWRTKFR…ASIKIATSLA (66 aa)) are Mitochondrial matrix-facing. Residues 298-302 (RTKFR) and 361-364 (NSGQ) each bind glutathione. A helical transmembrane segment spans residues 359-377 (FLNSGQNLIFSSALTAMMY). Topologically, residues 378–392 (MTCCGVADGSLTVGD) are mitochondrial intermembrane. Residues 393–414 (LVLVNQLVFQLSVPLNFLGSVY) form a helical membrane-spanning segment. Position 411 (Gly-411) interacts with glutathione. Topologically, residues 415 to 710 (RDLRQSLLDM…AEEKAAKKDV (296 aa)) are mitochondrial matrix. Residues 453–687 (IRFENVTYGY…DGLYKSMWDA (235 aa)) enclose the ABC transporter domain. Residues Tyr-462 and 486–497 (GPSGSGKSTILK) contribute to the ATP site.

It belongs to the ABC transporter superfamily. ABCB family. Heavy Metal importer (TC 3.A.1.210) subfamily. As to quaternary structure, homodimer.

Its subcellular location is the mitochondrion inner membrane. In terms of biological role, performs an essential function in the generation of cytoplasmic iron-sulfur proteins by mediating the ATP-dependent export of Fe/S cluster precursors synthesized by NFS1 and other mitochondrial proteins. Hydrolyzes ATP. Binds glutathione and may function by transporting a glutathione-conjugated iron-sulfur compound. The sequence is that of Iron-sulfur clusters transporter ATM1, mitochondrial from Yarrowia lipolytica (strain CLIB 122 / E 150) (Yeast).